The chain runs to 525 residues: uncharacterized protein (525 aa).

The zn(2)-C6 fungal-type DNA-binding region spans 21–48; it reads CLICRSMRKKCDEVHPQCGRCLKAGKQC.

The protein localises to the cytoplasm. Its subcellular location is the nucleus. This is an uncharacterized protein from Schizosaccharomyces pombe (strain 972 / ATCC 24843) (Fission yeast).